The following is a 222-amino-acid chain: Adenylate kinase (222 aa).

16-21 (GAGKGT) lines the ATP pocket. Positions 36 to 65 (ATGDMLRSQISKGTELGLQAKKIMDQGGLV) are NMP. AMP is bound by residues threonine 37, arginine 42, 63-65 (GLV), 92-95 (GFPR), and glutamine 99. The segment at 133 to 170 (GRLIHPASGRSYHKLFNPPKEDMKDDVTGEPLVQRSDD) is LID. ATP-binding positions include arginine 134 and 143 to 144 (SY). Residues arginine 167 and arginine 178 each contribute to the AMP site. Glutamine 206 provides a ligand contact to ATP.

This sequence belongs to the adenylate kinase family. AK2 subfamily. In terms of assembly, monomer.

Its subcellular location is the cytoplasm. The protein resides in the cytosol. It is found in the mitochondrion intermembrane space. It catalyses the reaction AMP + ATP = 2 ADP. In terms of biological role, catalyzes the reversible transfer of the terminal phosphate group between ATP and AMP. Plays an important role in cellular energy homeostasis and in adenine nucleotide metabolism. Adenylate kinase activity is critical for regulation of the phosphate utilization and the AMP de novo biosynthesis pathways. The protein is Adenylate kinase of Candida glabrata (strain ATCC 2001 / BCRC 20586 / JCM 3761 / NBRC 0622 / NRRL Y-65 / CBS 138) (Yeast).